The chain runs to 178 residues: Ribosome maturation factor RimM (178 aa).

One can recognise a PRC barrel domain in the interval 101-178 (ADEYYWYQLV…VMRVEWDADF (78 aa)).

Belongs to the RimM family. In terms of assembly, binds ribosomal protein uS19.

Its subcellular location is the cytoplasm. Functionally, an accessory protein needed during the final step in the assembly of 30S ribosomal subunit, possibly for assembly of the head region. Essential for efficient processing of 16S rRNA. May be needed both before and after RbfA during the maturation of 16S rRNA. It has affinity for free ribosomal 30S subunits but not for 70S ribosomes. This is Ribosome maturation factor RimM from Pseudomonas putida (strain GB-1).